The following is a 207-amino-acid chain: Ribosomal RNA large subunit methyltransferase E (207 aa).

5 residues coordinate S-adenosyl-L-methionine: G51, W53, D69, D85, and D108. Catalysis depends on K148, which acts as the Proton acceptor.

It belongs to the class I-like SAM-binding methyltransferase superfamily. RNA methyltransferase RlmE family.

The protein localises to the cytoplasm. The enzyme catalyses uridine(2552) in 23S rRNA + S-adenosyl-L-methionine = 2'-O-methyluridine(2552) in 23S rRNA + S-adenosyl-L-homocysteine + H(+). Specifically methylates the uridine in position 2552 of 23S rRNA at the 2'-O position of the ribose in the fully assembled 50S ribosomal subunit. This chain is Ribosomal RNA large subunit methyltransferase E, found in Methanospirillum hungatei JF-1 (strain ATCC 27890 / DSM 864 / NBRC 100397 / JF-1).